The sequence spans 329 residues: Prostaglandin reductase 1 (329 aa).

T18 carries the phosphothreonine modification. At S20 the chain carries Phosphoserine. Residues 152–155 (GAVG), K178, Y193, N217, 239–245 (CGAISQY), 270–272 (FIV), and N321 each bind NADP(+). K178 carries the post-translational modification N6-(2-hydroxyisobutyryl)lysine; alternate. K178 is modified (N6-acetyllysine; alternate).

The protein belongs to the NADP-dependent oxidoreductase L4BD family. In terms of assembly, monomer or homodimer.

It is found in the cytoplasm. It carries out the reaction 13,14-dihydro-15-oxo-prostaglandin E1 + NADP(+) = 15-oxoprostaglandin E1 + NADPH + H(+). The enzyme catalyses 13,14-dihydro-15-oxo-prostaglandin E2 + NADP(+) = 15-oxoprostaglandin E2 + NADPH + H(+). The catalysed reaction is 13,14-dihydro-15-oxo-prostaglandin F1alpha + NADP(+) = 15-oxoprostaglandin F1alpha + NADPH + H(+). It catalyses the reaction 13,14-dihydro-15-oxo-PGF2alpha + NADP(+) = 15-oxoprostaglandin F2alpha + NADPH + H(+). It carries out the reaction leukotriene B4 + NADP(+) = 12-oxo-leukotriene B4 + NADPH + H(+). The enzyme catalyses 20-hydroxy-leukotriene B4 + NADP(+) = 12-oxo-20-hydroxy-leukotriene B4 + NADPH + H(+). The catalysed reaction is 6-trans-leukotriene B4 + NADP(+) = 12-oxo-(5S)-hydroxy-(6E,8E,10E,14Z)-eicosatetraenoate + NADPH + H(+). It catalyses the reaction (5S,12S)-dihydroxy-(6E,10E,12E,14Z)-eicosatetraenoate + NADP(+) = 12-oxo-(5S)-hydroxy-(6E,8E,10E,14Z)-eicosatetraenoate + NADPH + H(+). It carries out the reaction an n-alkanal + NADP(+) = an alk-2-enal + NADPH + H(+). The enzyme catalyses hexanal + NADP(+) = (E)-hex-2-enal + NADPH + H(+). The catalysed reaction is octanal + NADP(+) = (2E)-octenal + NADPH + H(+). It catalyses the reaction decanal + NADP(+) = (2E)-decenal + NADPH + H(+). It carries out the reaction dodecanal + NADP(+) = (2E)-dodecenal + NADPH + H(+). The enzyme catalyses 4-hydroxynonanal + NADP(+) = (E)-4-hydroxynon-2-enal + NADPH + H(+). The catalysed reaction is pentan-2-one + NADP(+) = (E)-pent-3-en-2-one + NADPH + H(+). It catalyses the reaction nonan-2-one + NADP(+) = (3E)-nonen-2-one + NADPH + H(+). Functionally, NAD(P)H-dependent oxidoreductase involved in metabolic inactivation of pro- and anti-inflammatory eicosanoids: prostaglandins (PG), leukotrienes (LT) and lipoxins (LX). Catalyzes with high efficiency the reduction of the 13,14 double bond of 15-oxoPGs, including 15-oxo-PGE1, 15-oxo-PGE2, 15-oxo-PGF1-alpha and 15-oxo-PGF2-alpha. Catalyzes with lower efficiency the oxidation of the hydroxyl group at C12 of LTB4 and its derivatives, converting them into biologically less active 12-oxo-LTB4 metabolites. Reduces 15-oxo-LXA4 to 13,14 dihydro-15-oxo-LXA4, enhancing neutrophil recruitment at the inflammatory site. Plays a role in metabolic detoxification of alkenals and ketones. Reduces alpha,beta-unsaturated alkenals and ketones, particularly those with medium-chain length, showing highest affinity toward (2E)-decenal and (3E)-3-nonen-2-one. Inactivates 4-hydroxy-2-nonenal, a cytotoxic lipid constituent of oxidized low-density lipoprotein particles. The polypeptide is Prostaglandin reductase 1 (Ptgr1) (Rattus norvegicus (Rat)).